The sequence spans 156 residues: MNATRKQRLWLVIGVLTAAALAVTLIALALQRNMSYLFTPSQVDAGAAAGYQQFRLGGMVKAGSIQRATDSLTVTFKVIDKHAATQVEYTGILPDLFRDNQSVIANGRMQAGRFVANEVLAKHDETYMPKELKDAMAEGHVGKPIPAAAAPLSGVR.

Residues 1–8 (MNATRKQR) lie on the Cytoplasmic side of the membrane. Residues 9–29 (LWLVIGVLTAAALAVTLIALA) form a helical; Signal-anchor for type II membrane protein membrane-spanning segment. Residues 30–156 (LQRNMSYLFT…AAAAPLSGVR (127 aa)) lie on the Periplasmic side of the membrane. Positions 123 and 127 each coordinate heme.

The protein belongs to the CcmE/CycJ family.

The protein localises to the cell inner membrane. Functionally, heme chaperone required for the biogenesis of c-type cytochromes. Transiently binds heme delivered by CcmC and transfers the heme to apo-cytochromes in a process facilitated by CcmF and CcmH. This chain is Cytochrome c-type biogenesis protein CcmE 1, found in Xanthomonas campestris pv. campestris (strain 8004).